We begin with the raw amino-acid sequence, 201 residues long: MLVIGLTGGIASGKSTVARILERLGATIIDADLLAREAVLPGTPAHRAIVAAFGTEILLPDATIDRKALGRIVFANPDARRRLEAITHPAIARLSQARLAEARRSDAPAVFYVAPLLIEAGAADRVDDIWVVYADRETQLARLTERDGIGRGEAEQRLAAQMPMDEKASYGSAVIDNRGTSEETERQVVALWKERIEKNPR.

A DPCK domain is found at 3–201 (VIGLTGGIAS…WKERIEKNPR (199 aa)). 11-16 (ASGKST) contacts ATP.

The protein belongs to the CoaE family.

It is found in the cytoplasm. It carries out the reaction 3'-dephospho-CoA + ATP = ADP + CoA + H(+). Its pathway is cofactor biosynthesis; coenzyme A biosynthesis; CoA from (R)-pantothenate: step 5/5. Functionally, catalyzes the phosphorylation of the 3'-hydroxyl group of dephosphocoenzyme A to form coenzyme A. This is Dephospho-CoA kinase from Geobacter metallireducens (strain ATCC 53774 / DSM 7210 / GS-15).